Reading from the N-terminus, the 252-residue chain is tRNA (guanine-N(1)-)-methyltransferase (252 aa).

S-adenosyl-L-methionine is bound by residues G118 and I138–L143.

It belongs to the RNA methyltransferase TrmD family. Homodimer.

The protein resides in the cytoplasm. It carries out the reaction guanosine(37) in tRNA + S-adenosyl-L-methionine = N(1)-methylguanosine(37) in tRNA + S-adenosyl-L-homocysteine + H(+). Its function is as follows. Specifically methylates guanosine-37 in various tRNAs. The sequence is that of tRNA (guanine-N(1)-)-methyltransferase from Pseudomonas paraeruginosa (strain DSM 24068 / PA7) (Pseudomonas aeruginosa (strain PA7)).